Consider the following 149-residue polypeptide: Probable flagellum biosynthesis repressor protein FlbT (149 aa).

This sequence belongs to the FlbT family.

In terms of biological role, has a post-transcriptional repressor function in flagellum biogenesis. Associates with the 5'-UTR of fljK mRNA and promotes its degradation. The chain is Probable flagellum biosynthesis repressor protein FlbT from Rhizobium etli (strain CIAT 652).